We begin with the raw amino-acid sequence, 506 residues long: ATP synthase subunit alpha (506 aa).

Residue 170–177 (GDRQTGKT) coordinates ATP.

It belongs to the ATPase alpha/beta chains family. F-type ATPases have 2 components, CF(1) - the catalytic core - and CF(0) - the membrane proton channel. CF(1) has five subunits: alpha(3), beta(3), gamma(1), delta(1), epsilon(1). CF(0) has four main subunits: a(1), b(1), b'(1) and c(9-12).

It localises to the cellular thylakoid membrane. The catalysed reaction is ATP + H2O + 4 H(+)(in) = ADP + phosphate + 5 H(+)(out). Functionally, produces ATP from ADP in the presence of a proton gradient across the membrane. The alpha chain is a regulatory subunit. In Parasynechococcus marenigrum (strain WH8102), this protein is ATP synthase subunit alpha.